A 574-amino-acid chain; its full sequence is ATP synthase subunit beta, mitochondrial (574 aa).

A mitochondrion-targeting transit peptide spans 1–26 (MLSSVRLAALRAGKTNSVFQAVRAFA). 183 to 190 (GGAGVGKT) contacts ATP.

The protein belongs to the ATPase alpha/beta chains family. In terms of assembly, F-type ATPases have 2 components, CF(1) - the catalytic core - and CF(0) - the membrane proton channel. CF(1) has five subunits: alpha(3), beta(3), gamma(1), delta(1), epsilon(1). CF(0) has three main subunits: a, b and c.

The protein localises to the mitochondrion. The protein resides in the mitochondrion inner membrane. The catalysed reaction is ATP + H2O + 4 H(+)(in) = ADP + phosphate + 5 H(+)(out). Functionally, mitochondrial membrane ATP synthase (F(1)F(0) ATP synthase or Complex V) produces ATP from ADP in the presence of a proton gradient across the membrane which is generated by electron transport complexes of the respiratory chain. F-type ATPases consist of two structural domains, F(1) - containing the extramembraneous catalytic core, and F(0) - containing the membrane proton channel, linked together by a central stalk and a peripheral stalk. During catalysis, ATP synthesis in the catalytic domain of F(1) is coupled via a rotary mechanism of the central stalk subunits to proton translocation. Subunits alpha and beta form the catalytic core in F(1). Rotation of the central stalk against the surrounding alpha(3)beta(3) subunits leads to hydrolysis of ATP in three separate catalytic sites on the beta subunits. In Chlamydomonas reinhardtii (Chlamydomonas smithii), this protein is ATP synthase subunit beta, mitochondrial (ATP2).